The following is a 148-amino-acid chain: MRLHEIYPFQEERKNRKRVGRGGGSGWGGTSGKGHKGQNARSGGGVPAWFEGGQMPLARRLPKRGFKNPFREEYVALNVGQILGAFEGRTEISLEDIYERGLCKKGALVKVLGMGEVSAAVTIEAHRFSASATEKITKAGGTAKALEG.

A disordered region spans residues 12-52 (ERKNRKRVGRGGGSGWGGTSGKGHKGQNARSGGGVPAWFEG). Gly residues predominate over residues 21-32 (RGGGSGWGGTSG).

It belongs to the universal ribosomal protein uL15 family. As to quaternary structure, part of the 50S ribosomal subunit.

Binds to the 23S rRNA. The chain is Large ribosomal subunit protein uL15 from Maridesulfovibrio salexigens (strain ATCC 14822 / DSM 2638 / NCIMB 8403 / VKM B-1763) (Desulfovibrio salexigens).